We begin with the raw amino-acid sequence, 314 residues long: UDP-N-acetylenolpyruvoylglucosamine reductase (314 aa).

An FAD-binding PCMH-type domain is found at 25 to 191; sequence KIGGPADLFA…VRVGMELRWG (167 aa). Residue R170 is part of the active site. Residue S220 is the Proton donor of the active site. Residue E291 is part of the active site.

The protein belongs to the MurB family. The cofactor is FAD.

The protein resides in the cytoplasm. The enzyme catalyses UDP-N-acetyl-alpha-D-muramate + NADP(+) = UDP-N-acetyl-3-O-(1-carboxyvinyl)-alpha-D-glucosamine + NADPH + H(+). It functions in the pathway cell wall biogenesis; peptidoglycan biosynthesis. Its function is as follows. Cell wall formation. This chain is UDP-N-acetylenolpyruvoylglucosamine reductase, found in Heliobacterium modesticaldum (strain ATCC 51547 / Ice1).